The following is a 480-amino-acid chain: Proline--tRNA ligase (480 aa).

It belongs to the class-II aminoacyl-tRNA synthetase family. ProS type 3 subfamily. Homodimer.

It localises to the cytoplasm. It carries out the reaction tRNA(Pro) + L-proline + ATP = L-prolyl-tRNA(Pro) + AMP + diphosphate. In terms of biological role, catalyzes the attachment of proline to tRNA(Pro) in a two-step reaction: proline is first activated by ATP to form Pro-AMP and then transferred to the acceptor end of tRNA(Pro). The polypeptide is Proline--tRNA ligase (Methanosarcina mazei (strain ATCC BAA-159 / DSM 3647 / Goe1 / Go1 / JCM 11833 / OCM 88) (Methanosarcina frisia)).